The chain runs to 99 residues: Co-chaperonin GroES (99 aa).

This sequence belongs to the GroES chaperonin family. Heptamer of 7 subunits arranged in a ring. Interacts with the chaperonin GroEL.

It is found in the cytoplasm. In terms of biological role, together with the chaperonin GroEL, plays an essential role in assisting protein folding. The GroEL-GroES system forms a nano-cage that allows encapsulation of the non-native substrate proteins and provides a physical environment optimized to promote and accelerate protein folding. GroES binds to the apical surface of the GroEL ring, thereby capping the opening of the GroEL channel. This is Co-chaperonin GroES from Corynebacterium glutamicum (strain R).